We begin with the raw amino-acid sequence, 242 residues long: Ribonuclease PH (242 aa).

Phosphate-binding positions include R86 and 124 to 126; that span reads GTR.

This sequence belongs to the RNase PH family. In terms of assembly, homohexameric ring arranged as a trimer of dimers.

The enzyme catalyses tRNA(n+1) + phosphate = tRNA(n) + a ribonucleoside 5'-diphosphate. Functionally, phosphorolytic 3'-5' exoribonuclease that plays an important role in tRNA 3'-end maturation. Removes nucleotide residues following the 3'-CCA terminus of tRNAs; can also add nucleotides to the ends of RNA molecules by using nucleoside diphosphates as substrates, but this may not be physiologically important. Probably plays a role in initiation of 16S rRNA degradation (leading to ribosome degradation) during starvation. The protein is Ribonuclease PH of Photorhabdus laumondii subsp. laumondii (strain DSM 15139 / CIP 105565 / TT01) (Photorhabdus luminescens subsp. laumondii).